The chain runs to 166 residues: Small ribosomal subunit protein uS5 (166 aa).

Residues 11–74 enclose the S5 DRBM domain; that stretch reads LDDNVVAINR…EAAKKNLITV (64 aa).

This sequence belongs to the universal ribosomal protein uS5 family. Part of the 30S ribosomal subunit. Contacts proteins S4 and S8.

In terms of biological role, with S4 and S12 plays an important role in translational accuracy. Its function is as follows. Located at the back of the 30S subunit body where it stabilizes the conformation of the head with respect to the body. This is Small ribosomal subunit protein uS5 from Lactiplantibacillus plantarum (strain ATCC BAA-793 / NCIMB 8826 / WCFS1) (Lactobacillus plantarum).